A 380-amino-acid chain; its full sequence is Queuine tRNA-ribosyltransferase (380 aa).

Asp95 functions as the Proton acceptor in the catalytic mechanism. Substrate is bound by residues 95 to 99 (DSGGF), Asp149, Gln192, and Gly219. Residues 250–256 (GVGSPDA) form an RNA binding region. Asp269 (nucleophile) is an active-site residue. An RNA binding; important for wobble base 34 recognition region spans residues 274–278 (TRIAR). Positions 307, 309, 312, and 338 each coordinate Zn(2+).

The protein belongs to the queuine tRNA-ribosyltransferase family. Homodimer. Within each dimer, one monomer is responsible for RNA recognition and catalysis, while the other monomer binds to the replacement base PreQ1. It depends on Zn(2+) as a cofactor.

It catalyses the reaction 7-aminomethyl-7-carbaguanine + guanosine(34) in tRNA = 7-aminomethyl-7-carbaguanosine(34) in tRNA + guanine. Its pathway is tRNA modification; tRNA-queuosine biosynthesis. In terms of biological role, catalyzes the base-exchange of a guanine (G) residue with the queuine precursor 7-aminomethyl-7-deazaguanine (PreQ1) at position 34 (anticodon wobble position) in tRNAs with GU(N) anticodons (tRNA-Asp, -Asn, -His and -Tyr). Catalysis occurs through a double-displacement mechanism. The nucleophile active site attacks the C1' of nucleotide 34 to detach the guanine base from the RNA, forming a covalent enzyme-RNA intermediate. The proton acceptor active site deprotonates the incoming PreQ1, allowing a nucleophilic attack on the C1' of the ribose to form the product. After dissociation, two additional enzymatic reactions on the tRNA convert PreQ1 to queuine (Q), resulting in the hypermodified nucleoside queuosine (7-(((4,5-cis-dihydroxy-2-cyclopenten-1-yl)amino)methyl)-7-deazaguanosine). The sequence is that of Queuine tRNA-ribosyltransferase from Pediococcus pentosaceus (strain ATCC 25745 / CCUG 21536 / LMG 10740 / 183-1w).